The following is a 530-amino-acid chain: Probable NADH-specific resorcinol 4-hydroxylase (530 aa).

The enzyme catalyses resorcinol + NADH + O2 + H(+) = benzene-1,2,4-triol + NAD(+) + H2O. Functionally, single-component hydroxylase that is part of the gamma-resorcylate (GRA) degradation pathway. GRA is initially converted by GRA decarboxylase to resorcinol, which is hydroxylated by resorcinol 4-hydroxylase. This Rhodococcus jostii (strain RHA1) protein is Probable NADH-specific resorcinol 4-hydroxylase (tsdB).